The chain runs to 119 residues: Phosphoribosyl-AMP cyclohydrolase (119 aa).

Mg(2+) is bound at residue D77. Position 78 (C78) interacts with Zn(2+). Residues D79 and D81 each coordinate Mg(2+). Residues C94 and C101 each coordinate Zn(2+).

This sequence belongs to the PRA-CH family. Homodimer. Requires Mg(2+) as cofactor. Zn(2+) is required as a cofactor.

It localises to the cytoplasm. It carries out the reaction 1-(5-phospho-beta-D-ribosyl)-5'-AMP + H2O = 1-(5-phospho-beta-D-ribosyl)-5-[(5-phospho-beta-D-ribosylamino)methylideneamino]imidazole-4-carboxamide. It participates in amino-acid biosynthesis; L-histidine biosynthesis; L-histidine from 5-phospho-alpha-D-ribose 1-diphosphate: step 3/9. Catalyzes the hydrolysis of the adenine ring of phosphoribosyl-AMP. The chain is Phosphoribosyl-AMP cyclohydrolase from Ruegeria pomeroyi (strain ATCC 700808 / DSM 15171 / DSS-3) (Silicibacter pomeroyi).